The sequence spans 214 residues: Ribosomal RNA small subunit methyltransferase G (214 aa).

Residues G81, M86, 132–133 (VE), and R147 each bind S-adenosyl-L-methionine.

This sequence belongs to the methyltransferase superfamily. RNA methyltransferase RsmG family.

It localises to the cytoplasm. The enzyme catalyses guanosine(527) in 16S rRNA + S-adenosyl-L-methionine = N(7)-methylguanosine(527) in 16S rRNA + S-adenosyl-L-homocysteine. In terms of biological role, specifically methylates the N7 position of guanine in position 527 of 16S rRNA. This is Ribosomal RNA small subunit methyltransferase G from Pseudomonas aeruginosa (strain UCBPP-PA14).